A 257-amino-acid polypeptide reads, in one-letter code: Probable pectate lyase E (257 aa).

A signal peptide spans 1–17 (MYQKLLLVPLLLTSALA).

It belongs to the polysaccharide lyase 3 family. Ca(2+) serves as cofactor.

It localises to the secreted. It carries out the reaction Eliminative cleavage of (1-&gt;4)-alpha-D-galacturonan to give oligosaccharides with 4-deoxy-alpha-D-galact-4-enuronosyl groups at their non-reducing ends.. Pectinolytic enzyme consist of four classes of enzymes: pectin lyase, polygalacturonase, pectin methylesterase and rhamnogalacturonase. Among pectinolytic enzymes, pectin lyase is the most important in depolymerization of pectin, since it cleaves internal glycosidic bonds of highly methylated pectins. Favors pectate, the anion, over pectin, the methyl ester. The polypeptide is Probable pectate lyase E (plyE) (Aspergillus flavus (strain ATCC 200026 / FGSC A1120 / IAM 13836 / NRRL 3357 / JCM 12722 / SRRC 167)).